The following is a 273-amino-acid chain: Hydroxynaphthalene reductase arp2 (273 aa).

NADP(+) is bound by residues Ile24, Asp70, Asn97, and Arg130. Residues Ser146 and Ser147 each act as proton donor in the active site. 4 residues coordinate NADP(+): Tyr160, Lys164, Val193, and Ser195. The active-site Proton acceptor is Tyr160. The Lowers pKa of active site Tyr role is filled by Lys164.

This sequence belongs to the short-chain dehydrogenases/reductases (SDR) family.

It is found in the endosome. Its pathway is pigment biosynthesis; melanin biosynthesis. Tricyclazole and pyroquilon inhibit arp2 hydroxynaphtalene reductase activity. Its function is as follows. Hydroxynaphthalene reductase; part of the gene cluster that mediates the biosynthesis of dihydroxynaphthalene (DHN)-melanin, a bluish-green pigment and a structural component of the conidial wall. The first step of the pathway is the production of the heptaketide naphtopyrone YWA1 by the polyketide synthase alb1 though condensation of acetyl-CoA with malonyl-CoA. The naphtopyrone YWA1 is then converted to the pentaketide 1,3,6,8-tetrahydroxynaphthalene (1,3,6,8-THN) by the heptaketide hydrolyase ayg1 though chain-length shortening. 1,3,6,8-THN is substrate of the hydroxynaphthalene reductase arp2 to yield scytalone. The scytalone dehydratase arp1 then reduces scytalone to 1,3,8-THN. 1,3,8-THN is also substrate of the hydroxynaphthalene reductase arp2 to yield vermelone. Vermelone is further converted by the multicopper oxidase abr1 to 1,8-DHN. Finally the laccase abr2 transforms 1,8-DHN to DHN-melanin. DHN-melanin biosynthesis appears to be initiated in endosomes where early enzymes (abl1, ayg1, arp1 and arp2) localize, with exocytosis leading to melanin deposition on the cell surface where late enzymes (abr1 and abr2) localize. DHN-melanin is an important structural component of the outer cell wall and is required for the presence of conidial surface hydrophobins. DHN-melanin also plays a crucial role in fungal virulence, including a protective role against the host's immune defenses. DHN-melanin also protects conidia against amoeba predation. In Aspergillus fumigatus (strain ATCC MYA-4609 / CBS 101355 / FGSC A1100 / Af293) (Neosartorya fumigata), this protein is Hydroxynaphthalene reductase arp2.